The sequence spans 467 residues: 2-succinylbenzoate--CoA ligase (467 aa).

Belongs to the ATP-dependent AMP-binding enzyme family. MenE subfamily.

The enzyme catalyses 2-succinylbenzoate + ATP + CoA = 2-succinylbenzoyl-CoA + AMP + diphosphate. Its pathway is quinol/quinone metabolism; 1,4-dihydroxy-2-naphthoate biosynthesis; 1,4-dihydroxy-2-naphthoate from chorismate: step 5/7. The protein operates within quinol/quinone metabolism; menaquinone biosynthesis. Converts 2-succinylbenzoate (OSB) to 2-succinylbenzoyl-CoA (OSB-CoA). This Listeria monocytogenes serotype 4b (strain F2365) protein is 2-succinylbenzoate--CoA ligase.